A 343-amino-acid chain; its full sequence is E3 ubiquitin-protein ligase RNF113A (343 aa).

The residue at position 2 (A2) is an N-acetylalanine. The important for interaction with SNRNP200/BRR2 stretch occupies residues 2 to 60 (AEQLSPGKAVDQVCTFLFKKPGRKGAAGRRKRPACDPEPGESGSSSDEGCTVVRPEKKR). A Phosphoserine modification is found at S6. A compositionally biased stretch (basic residues) spans 22–33 (PGRKGAAGRRKR). Residues 22–96 (PGRKGAAGRR…EEEENEPESL (75 aa)) form a disordered region. A compositionally biased stretch (low complexity) spans 41–50 (GESGSSSDEG). Residues 50–61 (GCTVVRPEKKRV) are important for interaction with CXCR4. S84 and S85 each carry phosphoserine. Positions 84-93 (SSEEEEENEP) are enriched in acidic residues. The segment at 196–224 (DYQPDICKDYKETGFCGFGDSCKFLHDRS) adopts a C3H1-type zinc-finger fold. S253 carries the phosphoserine modification. The RING-type zinc finger occupies 262 to 300 (CFICRQSFQNPVVTKCRHYFCESCALQHFRTTPRCYVCD). Residues 322–343 (ATGEGGASDLPEDPDEDAIPIT) form a disordered region. Residues 331–343 (LPEDPDEDAIPIT) are compositionally biased toward acidic residues.

In terms of assembly, component of pre-catalytic and catalytic spliceosome complexes. Interacts (via N-terminus) with the spliceosome subunit SNRNP200/BRR2. Component of the minor spliceosome, which splices U12-type introns. Within this complex, interacts with SCNM1 and CRIPT. Ubiquitous.

The protein resides in the nucleus. The protein localises to the nucleus speckle. The catalysed reaction is S-ubiquitinyl-[E2 ubiquitin-conjugating enzyme]-L-cysteine + [acceptor protein]-L-lysine = [E2 ubiquitin-conjugating enzyme]-L-cysteine + N(6)-ubiquitinyl-[acceptor protein]-L-lysine.. The protein operates within protein modification; protein ubiquitination. In terms of biological role, required for pre-mRNA splicing as component of the spliceosome. As a component of the minor spliceosome, involved in the splicing of U12-type introns in pre-mRNAs. E3 ubiquitin-protein ligase that catalyzes the transfer of ubiquitin onto target proteins. Catalyzes polyubiquitination of SNRNP200/BRR2 with non-canonical 'Lys-63'-linked polyubiquitin chains. Plays a role in DNA repair via its role in the synthesis of 'Lys-63'-linked polyubiquitin chains that recruit ALKBH3 and the ASCC complex to sites of DNA damage by alkylating agents. Ubiquitinates CXCR4, leading to its degradation, and thereby contributes to the termination of CXCR4 signaling. The protein is E3 ubiquitin-protein ligase RNF113A (RNF113A) of Homo sapiens (Human).